Consider the following 350-residue polypeptide: Paired box protein Pax-4 (350 aa).

A DNA-binding region (paired) is located at residues 5–131 (GISSMNQLGG…SSINRVLRAL (127 aa)). Residues 8-64 (SMNQLGGLFVNGRPLPLDTRQQIVRLAVSGMRPCDISRILKVSNGCVSKILGRYYRT) form a PAI subdomain region. Positions 83-131 (PVVARIAQLKGECPALFAWEIQRQLCAEGLCTQDKTPSVSSINRVLRAL) are RED subdomain. Positions 153 to 172 (LTPHSGSETPRGTHPGTGHR) are disordered. The segment at residues 170 to 229 (GHRNRTIFSPSQAEALEKEFQRGQYPDSVARGKLATATSLPEDTVRVWFSNRRAKWRRQE) is a DNA-binding region (homeobox). A transcription repression region spans residues 278–350 (CYQLCWATAP…ATPTHFSHWP (73 aa)).

It belongs to the paired homeobox family.

It localises to the nucleus. In terms of biological role, plays an important role in the differentiation and development of pancreatic islet beta cells. Transcriptional repressor that binds to a common element in the glucagon, insulin and somatostatin promoters. Competes with PAX6 for this same promoter binding site. Isoform 2 appears to be a dominant negative form antagonizing PAX4 transcriptional activity. The sequence is that of Paired box protein Pax-4 (PAX4) from Homo sapiens (Human).